A 1679-amino-acid polypeptide reads, in one-letter code: Maestro heat-like repeat-containing protein family member 2A (1679 aa).

HEAT repeat units follow at residues 68–91 (ATTD…ISTQ), 92–128 (RKMN…QMRD), 190–229 (MPYM…TVQF), 293–313 (EQVY…GHWP), 314–350 (LFPS…ELHV), 380–417 (SYPK…ADDP), 422–459 (KTIY…SGFQ), 571–610 (PAPQ…SIAP), 614–654 (DMWE…SLKK), 737–774 (KTVL…ETVK), 848–887 (SALT…MKPF), 991–1028 (GQFG…LHVS), 1219–1261 (DPLM…SHGP), 1387–1425 (KLLR…GAPR), and 1632–1669 (MDLV…CNQH).

The polypeptide is Maestro heat-like repeat-containing protein family member 2A (Mroh2a) (Mus musculus (Mouse)).